The chain runs to 422 residues: Glutamate-1-semialdehyde 2,1-aminomutase (422 aa).

K264 carries the post-translational modification N6-(pyridoxal phosphate)lysine.

The protein belongs to the class-III pyridoxal-phosphate-dependent aminotransferase family. HemL subfamily. In terms of assembly, homodimer. The cofactor is pyridoxal 5'-phosphate.

The protein resides in the cytoplasm. It catalyses the reaction (S)-4-amino-5-oxopentanoate = 5-aminolevulinate. It participates in porphyrin-containing compound metabolism; protoporphyrin-IX biosynthesis; 5-aminolevulinate from L-glutamyl-tRNA(Glu): step 2/2. This Clostridium tetani (strain Massachusetts / E88) protein is Glutamate-1-semialdehyde 2,1-aminomutase.